We begin with the raw amino-acid sequence, 693 residues long: MASSSTSLKRREQPISRDGDQLIVTPLGAGSEVGRSCVYMSFRGKNILFDCGIHPAYSGMAALPYFDEIDPSSIDVLLITHFHIDHAASLPYFLEKTTFNGRVFMTHATKAIYKLLLTDYVKVSKVSVEDMLFDEQDINKSMDKIEVIDFHQTVEVNGIKFWCYTAGHVLGAAMFMVDIAGVRILYTGDYSREEDRHLRAAELPQFSPDICIIESTSGVQLHQSRHIREKRFTDVIHSTVAQGGRVLIPAFALGRAQELLLILDEYWANHPDLHNIPIYYASPLAKKCMAVYQTYILSMNDRIRNQFANSNPFVFKHISPLNSIDDFNDVGPSVVMATPGGLQSGLSRQLFDSWCSDKKNACIIPGYMVEGTLAKTIINEPKEVTLMNGLTAPLNMQVHYISFSAHADYAQTSTFLKELMPPNIILVHGEANEMMRLKQKLLTEFPDGNTKIMTPKNCESVEMYFNSEKLAKTIGRLAEKTPDVGDTVSGILVKKGFTYQIMAPDELHVFSQLSTATVTQRITIPFVGAFGVIKHRLEKIFESVEFSTDEESGLPALKVHERVTVKQESEKHISLQWSSDPISDMVSDSIVALILNISREVPKIVMEEEDAVKSEEENGKKVEKVIYALLVSLFGDVKLGENGKLVIRVDGNVAQLDKESGEVESEHSGLKERVRVAFERIQSAVKPIPLSAS.

Positions 81–86 match the HXHXDH motif motif; that stretch reads HFHIDH.

This sequence belongs to the metallo-beta-lactamase superfamily. RNA-metabolizing metallo-beta-lactamase-like family. INTS11 subfamily. In terms of assembly, component of the CPSF complex, at least composed of CPSF160, CPSF100, CPSF73-I, CPSF73-II, CPSF30, FY and FIPS5. Interacts with CLPS3, CPSF100, CPSF160 and FY. In terms of tissue distribution, highly expressed in carpels. Also detected in seedlings, roots, stems, leaves, flowers and siliques.

The protein resides in the nucleus. Its function is as follows. Component of the cleavage and polyadenylation specificity factor (CPSF) complex that play a key role in pre-mRNA 3'-end formation, recognizing the AAUAAA signal sequence and interacting with poly(A) polymerase and other factors to bring about cleavage and poly(A) addition. May function as mRNA 3'-end-processing endonuclease and also be involved in the histone 3'-end pre-mRNA processing. The protein is Cleavage and polyadenylation specificity factor subunit 3-I (CPSF73-I) of Arabidopsis thaliana (Mouse-ear cress).